A 555-amino-acid polypeptide reads, in one-letter code: CTP synthase (555 aa).

Residues 1-277 (MPKEPETEYD…DQHVMERLNV (277 aa)) are amidoligase domain. Residue serine 26 coordinates CTP. Serine 26 lines the UTP pocket. 27-32 (GLGKGI) is a binding site for ATP. Tyrosine 67 contacts L-glutamine. Residue aspartate 84 participates in ATP binding. Aspartate 84 and glutamate 152 together coordinate Mg(2+). CTP contacts are provided by residues 159 to 161 (DIE), 198 to 203 (KTKPTQ), and lysine 234. UTP contacts are provided by residues 198-203 (KTKPTQ) and lysine 234. The Glutamine amidotransferase type-1 domain maps to 307-542 (LVGKYDLEDA…LKSVDSTLDA (236 aa)). Position 364 (glycine 364) interacts with L-glutamine. The Nucleophile; for glutamine hydrolysis role is filled by cysteine 391. Residues 392-395 (LGFQ), glutamate 415, and arginine 472 each bind L-glutamine. Active-site residues include histidine 515 and glutamate 517.

This sequence belongs to the CTP synthase family. As to quaternary structure, homotetramer.

It carries out the reaction UTP + L-glutamine + ATP + H2O = CTP + L-glutamate + ADP + phosphate + 2 H(+). It catalyses the reaction L-glutamine + H2O = L-glutamate + NH4(+). The catalysed reaction is UTP + NH4(+) + ATP = CTP + ADP + phosphate + 2 H(+). The protein operates within pyrimidine metabolism; CTP biosynthesis via de novo pathway; CTP from UDP: step 2/2. Allosterically activated by GTP, when glutamine is the substrate; GTP has no effect on the reaction when ammonia is the substrate. The allosteric effector GTP functions by stabilizing the protein conformation that binds the tetrahedral intermediate(s) formed during glutamine hydrolysis. Inhibited by the product CTP, via allosteric rather than competitive inhibition. Catalyzes the ATP-dependent amination of UTP to CTP with either L-glutamine or ammonia as the source of nitrogen. Regulates intracellular CTP levels through interactions with the four ribonucleotide triphosphates. The chain is CTP synthase from Haloquadratum walsbyi (strain DSM 16790 / HBSQ001).